Consider the following 631-residue polypeptide: DNA mismatch repair protein MutL (631 aa).

The disordered stretch occupies residues 389–423 (GEREASRQAGGQRVQETQMSSYGSGQSGGRGRSYA).

It belongs to the DNA mismatch repair MutL/HexB family.

Functionally, this protein is involved in the repair of mismatches in DNA. It is required for dam-dependent methyl-directed DNA mismatch repair. May act as a 'molecular matchmaker', a protein that promotes the formation of a stable complex between two or more DNA-binding proteins in an ATP-dependent manner without itself being part of a final effector complex. This is DNA mismatch repair protein MutL from Shewanella loihica (strain ATCC BAA-1088 / PV-4).